The following is a 337-amino-acid chain: Glyceraldehyde-3-phosphate dehydrogenase 1 (337 aa).

NAD(+) contacts are provided by residues 11 to 12, aspartate 33, and arginine 78; that span reads RI. D-glyceraldehyde 3-phosphate is bound by residues 149 to 151, threonine 180, 209 to 210, and arginine 232; these read SCT and TG. Cysteine 150 functions as the Nucleophile in the catalytic mechanism. Asparagine 318 lines the NAD(+) pocket.

This sequence belongs to the glyceraldehyde-3-phosphate dehydrogenase family. As to quaternary structure, homotetramer.

Its subcellular location is the cytoplasm. It carries out the reaction D-glyceraldehyde 3-phosphate + phosphate + NAD(+) = (2R)-3-phospho-glyceroyl phosphate + NADH + H(+). It functions in the pathway carbohydrate degradation; glycolysis; pyruvate from D-glyceraldehyde 3-phosphate: step 1/5. This Agaricus bisporus (White button mushroom) protein is Glyceraldehyde-3-phosphate dehydrogenase 1 (gpd1).